Reading from the N-terminus, the 172-residue chain is Myosin regulatory light polypeptide 9 (172 aa).

Residues 1–16 (MSSKRAKAKTTKKRPQ) show a composition bias toward basic residues. Residues 1-20 (MSSKRAKAKTTKKRPQRATS) form a disordered region. Ser-2 carries the N-acetylserine modification. Thr-19 bears the Phosphothreonine; by MLCK, CIT and ROCK2 mark. Phosphoserine; by CDC42BP, CIT, MLCK, PAK1, ROCK1, ROCK2, DAPK1, DAPK2 and ZIPK/DAPK3 is present on Ser-20. 3 consecutive EF-hand domains span residues 29 to 64 (SQIQ…LGKN), 98 to 133 (DPED…MGDR), and 134 to 169 (FTDE…GAKD). Ca(2+) contacts are provided by Asp-42, Asn-44, Asp-46, and Asp-53.

As to quaternary structure, myosin is a hexamer of 2 heavy chains and 4 light chains: interacts with myosin heavy chain MYO19. Interacts with LUZP1; the interaction results in inhibition of phosphorylation of MYL9 by DAPK3. Post-translationally, phosphorylation increases the actin-activated myosin ATPase activity and thereby regulates the contractile activity. It is required to generate the driving force in the migration of the cells but not necessary for localization of myosin-2 at the leading edge. Phosphorylation is required for myotube formation. Phosphorylated by DAPK3; DAPK3-mediated phosphorylation is inhibited by LUZP1.

It is found in the cytoplasm. The protein localises to the cytoskeleton. The protein resides in the cell cortex. Its function is as follows. Myosin regulatory subunit that plays an important role in regulation of both smooth muscle and nonmuscle cell contractile activity via its phosphorylation. Implicated in cytokinesis, receptor capping, and cell locomotion. In myoblasts, regulates PIEZO1-dependent cortical actomyosin assembly involved in myotube formation. This chain is Myosin regulatory light polypeptide 9 (Myl9), found in Mus musculus (Mouse).